The primary structure comprises 322 residues: Putative integrase ORF3 (322 aa).

Residues 153–322 (RGKLTDFKSI…SSKEMFLQNI (170 aa)) enclose the Integrase catalytic domain.

It belongs to the plectrovirus integrase ORF3 family.

This protein may encode an integrase, which is necessary for integration of the viral DNA into host genome. In Spiroplasma virus SpV1-R8A2 B (SpV1), this protein is Putative integrase ORF3.